We begin with the raw amino-acid sequence, 537 residues long: 2-succinyl-5-enolpyruvyl-6-hydroxy-3-cyclohexene-1-carboxylate synthase (537 aa).

The protein belongs to the TPP enzyme family. MenD subfamily. In terms of assembly, homodimer. Requires Mg(2+) as cofactor. The cofactor is Mn(2+). Thiamine diphosphate serves as cofactor.

It catalyses the reaction isochorismate + 2-oxoglutarate + H(+) = 5-enolpyruvoyl-6-hydroxy-2-succinyl-cyclohex-3-ene-1-carboxylate + CO2. The protein operates within quinol/quinone metabolism; 1,4-dihydroxy-2-naphthoate biosynthesis; 1,4-dihydroxy-2-naphthoate from chorismate: step 2/7. Its pathway is quinol/quinone metabolism; menaquinone biosynthesis. In terms of biological role, catalyzes the thiamine diphosphate-dependent decarboxylation of 2-oxoglutarate and the subsequent addition of the resulting succinic semialdehyde-thiamine pyrophosphate anion to isochorismate to yield 2-succinyl-5-enolpyruvyl-6-hydroxy-3-cyclohexene-1-carboxylate (SEPHCHC). This is 2-succinyl-5-enolpyruvyl-6-hydroxy-3-cyclohexene-1-carboxylate synthase from Nocardioides sp. (strain ATCC BAA-499 / JS614).